The following is a 116-amino-acid chain: Large ribosomal subunit protein bL19 (116 aa).

This sequence belongs to the bacterial ribosomal protein bL19 family.

Functionally, this protein is located at the 30S-50S ribosomal subunit interface and may play a role in the structure and function of the aminoacyl-tRNA binding site. The chain is Large ribosomal subunit protein bL19 from Staphylococcus epidermidis (strain ATCC 35984 / DSM 28319 / BCRC 17069 / CCUG 31568 / BM 3577 / RP62A).